Reading from the N-terminus, the 245-residue chain is Eukaryotic translation initiation factor 6 (245 aa).

It belongs to the eIF-6 family. As to quaternary structure, monomer. Associates with the 60S ribosomal subunit.

It localises to the cytoplasm. Its subcellular location is the nucleus. The protein resides in the nucleolus. Binds to the 60S ribosomal subunit and prevents its association with the 40S ribosomal subunit to form the 80S initiation complex in the cytoplasm. May also be involved in ribosome biogenesis. This chain is Eukaryotic translation initiation factor 6, found in Drosophila melanogaster (Fruit fly).